Consider the following 660-residue polypeptide: Acetyl-coenzyme A synthetase (660 aa).

Residues 197–200 and Thr-317 contribute to the CoA site; that span reads RGGK. ATP is bound by residues 397–399, 421–426, Asp-512, and Arg-528; these read GEP and DTWWQT. Residue Ser-536 coordinates CoA. Arg-539 provides a ligand contact to ATP. Residues Val-550 and Val-555 each contribute to the Mg(2+) site. At Lys-625 the chain carries N6-acetyllysine.

The protein belongs to the ATP-dependent AMP-binding enzyme family. Mg(2+) is required as a cofactor. Post-translationally, acetylated. Deacetylation by the SIR2-homolog deacetylase activates the enzyme.

The enzyme catalyses acetate + ATP + CoA = acetyl-CoA + AMP + diphosphate. Catalyzes the conversion of acetate into acetyl-CoA (AcCoA), an essential intermediate at the junction of anabolic and catabolic pathways. AcsA undergoes a two-step reaction. In the first half reaction, AcsA combines acetate with ATP to form acetyl-adenylate (AcAMP) intermediate. In the second half reaction, it can then transfer the acetyl group from AcAMP to the sulfhydryl group of CoA, forming the product AcCoA. The chain is Acetyl-coenzyme A synthetase from Paraburkholderia phymatum (strain DSM 17167 / CIP 108236 / LMG 21445 / STM815) (Burkholderia phymatum).